Reading from the N-terminus, the 291-residue chain is Sesquiterpene cyclase astC (291 aa).

It belongs to the HAD-like hydrolase superfamily.

It catalyses the reaction (2E,6E)-farnesyl diphosphate = (S,S)-drim-8-en-11-yl diphosphate. It participates in secondary metabolite biosynthesis; terpenoid biosynthesis. In terms of biological role, sesquiterpene cyclase; part of the gene cluster that mediates the biosynthesis of astellolides, drimane-type sesquiterpene esters that show antimicrobial, anti-inflammatory, and anti-tumor activities. The first step in astellolide biosynthesis is performed by the sesquiterpene cyclase astC that catalyzes the formation of drimanyl pyrophosphate from farnesyl pyrophosphate. Drimanyl pyrophosphate is then dephosphorylated by the sesquiterpene phosphatase astI to produce drimanyl monophosphate which is further dephosphorylated to drim-8-ene-11-ol by atsK. Drim-8-ene-11-ol is converted to confertifolin, probably by the cytochrome P450 monooxygenase astD and/or the dehydrogenase astE. The cytochrome P450 monooxygenases astB, astF and astJ then hydroxylate confertifolin at C6, C14, or C15 to form trihydroxy confertifolin. The nonribosomal peptide synthetase astA catalyzes ester bond formation between trihydroxy contifolin and benzoic acid (BA) or 4-hydroxy benzoic acid (4HBA), leading to the formation of dideacetyl astellolides A and B, respectively. Finally, the O-acetyltransferase astG converts dideacetyl astellolides A and B into deacetyl astellolides A and B. This chain is Sesquiterpene cyclase astC, found in Aspergillus oryzae (strain ATCC 42149 / RIB 40) (Yellow koji mold).